The sequence spans 1392 residues: DNA-directed RNA polymerase subunit beta'' (1392 aa).

Positions 224, 295, 302, and 305 each coordinate Zn(2+).

The protein belongs to the RNA polymerase beta' chain family. RpoC2 subfamily. As to quaternary structure, in plastids the minimal PEP RNA polymerase catalytic core is composed of four subunits: alpha, beta, beta', and beta''. When a (nuclear-encoded) sigma factor is associated with the core the holoenzyme is formed, which can initiate transcription. It depends on Zn(2+) as a cofactor.

It is found in the plastid. Its subcellular location is the chloroplast. The catalysed reaction is RNA(n) + a ribonucleoside 5'-triphosphate = RNA(n+1) + diphosphate. Its function is as follows. DNA-dependent RNA polymerase catalyzes the transcription of DNA into RNA using the four ribonucleoside triphosphates as substrates. In Eucalyptus globulus subsp. globulus (Tasmanian blue gum), this protein is DNA-directed RNA polymerase subunit beta''.